Here is a 504-residue protein sequence, read N- to C-terminus: ATP synthase subunit alpha, chloroplastic (504 aa).

170-177 (GDRQTGKT) serves as a coordination point for ATP.

This sequence belongs to the ATPase alpha/beta chains family. As to quaternary structure, F-type ATPases have 2 components, CF(1) - the catalytic core - and CF(0) - the membrane proton channel. CF(1) has five subunits: alpha(3), beta(3), gamma(1), delta(1), epsilon(1). CF(0) has four main subunits: a, b, b' and c.

It is found in the plastid. The protein resides in the chloroplast thylakoid membrane. It carries out the reaction ATP + H2O + 4 H(+)(in) = ADP + phosphate + 5 H(+)(out). In terms of biological role, produces ATP from ADP in the presence of a proton gradient across the membrane. The alpha chain is a regulatory subunit. This is ATP synthase subunit alpha, chloroplastic from Triticum aestivum (Wheat).